A 337-amino-acid chain; its full sequence is Ornithine carbamoyltransferase (337 aa).

Carbamoyl phosphate contacts are provided by residues 57 to 60, Q84, R108, and 135 to 138; these read STRT and HPTQ. L-ornithine is bound by residues N167, D231, and 235–236; that span reads SM. Residues 272–273 and R317 contribute to the carbamoyl phosphate site; that span reads CL.

The protein belongs to the aspartate/ornithine carbamoyltransferase superfamily. OTCase family.

It localises to the cytoplasm. The catalysed reaction is carbamoyl phosphate + L-ornithine = L-citrulline + phosphate + H(+). Its pathway is amino-acid degradation; L-arginine degradation via ADI pathway; carbamoyl phosphate from L-arginine: step 2/2. Functionally, reversibly catalyzes the transfer of the carbamoyl group from carbamoyl phosphate (CP) to the N(epsilon) atom of ornithine (ORN) to produce L-citrulline. This Streptococcus equi subsp. zooepidemicus (strain MGCS10565) protein is Ornithine carbamoyltransferase.